The sequence spans 60 residues: Large ribosomal subunit protein uL30 (60 aa).

It belongs to the universal ribosomal protein uL30 family. As to quaternary structure, part of the 50S ribosomal subunit.

The chain is Large ribosomal subunit protein uL30 from Levilactobacillus brevis (strain ATCC 367 / BCRC 12310 / CIP 105137 / JCM 1170 / LMG 11437 / NCIMB 947 / NCTC 947) (Lactobacillus brevis).